Reading from the N-terminus, the 810-residue chain is Probable inorganic carbon transporter subunit DabA (810 aa).

Zn(2+) is bound by residues C347, D349, H509, and C524.

Belongs to the inorganic carbon transporter (TC 9.A.2) DabA family. Forms a complex with DabB. The cofactor is Zn(2+).

It is found in the cell inner membrane. Its function is as follows. Part of an energy-coupled inorganic carbon pump. This Marinomonas sp. (strain MWYL1) protein is Probable inorganic carbon transporter subunit DabA.